A 367-amino-acid chain; its full sequence is Peptide chain release factor 2 (367 aa).

Glutamine 254 is subject to N5-methylglutamine.

This sequence belongs to the prokaryotic/mitochondrial release factor family. Post-translationally, methylated by PrmC. Methylation increases the termination efficiency of RF2.

The protein localises to the cytoplasm. Its function is as follows. Peptide chain release factor 2 directs the termination of translation in response to the peptide chain termination codons UGA and UAA. The polypeptide is Peptide chain release factor 2 (Burkholderia cenocepacia (strain ATCC BAA-245 / DSM 16553 / LMG 16656 / NCTC 13227 / J2315 / CF5610) (Burkholderia cepacia (strain J2315))).